The sequence spans 358 residues: MSLQSLKINFAEWLLLKVKYPSQYWLGAADQPVKAAAHQKKIILTLLPSHDNLGDHAIAYASKAFLEQEYPDFDIVEVDMKDIYKSAKSLIRSRHPEDMVFIIGGGNMGDLYRYEEWTRRFIIKTFHDYRVVQLPATAHFSDTKKGRKELKRAQKIYNAHPGLLLMARDETTYQFMKQHFQEKTILKQPDMVLYLDRSKAPAEREGVYMCLREDQESVLQEEQRNRVKAALCEEFGEIKSFTTTIGRRVSRDTREHELEALWSKLQSAEAVVTDRLHGMIFCALTGTPCVVIRSFDHKVMEGYQWLKDIPFMKLIEHPEPERVTAAVNELLTKETSRAGFPRDVYFKGLRDKISGEAQ.

The protein belongs to the polysaccharide pyruvyl transferase family.

Functionally, may be involved in the production of the exopolysaccharide (EPS) component of the extracellular matrix during biofilm formation. EPS is responsible for the adhesion of chains of cells into bundles. This chain is Putative pyruvyl transferase EpsI (epsI), found in Bacillus subtilis (strain 168).